The chain runs to 642 residues: Fimbrin (642 aa).

EF-hand domains lie at 16–50 (EDLF…KDGD) and 51–86 (ATYD…LRES). Ca(2+)-binding residues include aspartate 29, aspartate 31, tryptophan 35, aspartate 66, serine 68, arginine 70, and aspartate 75. 2 actin-binding regions span residues 125–394 (IVAG…GLEP) and 395–642 (IQEE…TLNK). Calponin-homology (CH) domains are found at residues 139–259 (EEER…RRGL), 287–390 (LPPE…NTHP), 411–521 (EREA…RRNI), and 534–642 (DMSD…TLNK).

In terms of biological role, binds to actin, and functionally associates with actin structures involved in the development and maintenance of cell polarity. This chain is Fimbrin (SAC6), found in Saccharomyces cerevisiae (strain ATCC 204508 / S288c) (Baker's yeast).